The sequence spans 69 residues: DNA gyrase inhibitor YacG (69 aa).

4 residues coordinate Zn(2+): Cys7, Cys10, Cys26, and Cys30.

The protein belongs to the DNA gyrase inhibitor YacG family. Interacts with GyrB. The cofactor is Zn(2+).

Functionally, inhibits all the catalytic activities of DNA gyrase by preventing its interaction with DNA. Acts by binding directly to the C-terminal domain of GyrB, which probably disrupts DNA binding by the gyrase. This is DNA gyrase inhibitor YacG from Shewanella baltica (strain OS155 / ATCC BAA-1091).